Consider the following 706-residue polypeptide: MAKISTQYSHPTRTHPSVRTMDRDLDCIENGLSRTHLPCEETSSELQEGIAMETRGLAESRQSSFTSQGPTRLSRLIISLRAWSARHLHQEDQRPDSFLERFRGAELQEVSSRESHVQFNVGSQEPPDRGRSAWPLARNNTNTCNNSEKDDKAKKEEKEKKEEKKENPKKEEKKKDSVVMDPSSNMYYHWLTVIAVPVFYNWCLLVCRACFDELQSEHLMLWLVLDYSADILYGMDMLVRARTGFLEQGLMVMDASRLWKHYTQTLHFKLDVLSLVPTDLAYFKLGMNYPELRFNRLLKLARLFEFFDRTETRTNYPNMFRIGNLVLYILIIIHWNACIYFAISKFIGFGTDSWVYPNVSNPEYGRLSRKYIYSLYWSTLTLTTIGETPPPVKDEEYLFVVIDFLVGVLIFATIVGNVGSMISNMNASRAEFQAKIDSIKQYMQFRKVTKDLETRVIRWFDYLWANKKTVDEKEVLKSLPDKLKAEIAINVHLDTLRKVRIFQDCEAGLLVELVLKLRPAVFSPGDYICKKGDIGREMYIIKEGKLAVVAEDGITQFVVLGDGSYFGEISILNIKGSKSGNRRTANIRSIGYSDLFCLSKDDLMEALTEYPEAKKALEEKGRQILMKDNLIDEELAKAGADPKDIEEKVEHLETSLDSLQTRFARLLAEYNATQMKVKQRLSQLESQVKMGLPPDGDAPQTEASQP.

The Cytoplasmic segment spans residues methionine 1–histidine 189. The interval arginine 113–serine 177 is disordered. The span at serine 147–serine 177 shows a compositional bias: basic and acidic residues. Residues tryptophan 190–phenylalanine 211 traverse the membrane as a helical segment. Topologically, residues aspartate 212–glutamate 217 are extracellular. A helical transmembrane segment spans residues histidine 218–leucine 238. The Cytoplasmic segment spans residues valine 239 to threonine 265. The helical transmembrane segment at leucine 266–leucine 285 threads the bilayer. Topologically, residues glycine 286–tyrosine 289 are extracellular. The chain crosses the membrane as a helical span at residues proline 290–phenylalanine 307. Residues aspartate 308–proline 317 lie on the Cytoplasmic side of the membrane. The tract at residues proline 317 to methionine 425 is ion conduction pathway. The chain crosses the membrane as a helical span at residues asparagine 318 to tyrosine 340. At phenylalanine 341–arginine 366 the chain is on the extracellular side. Asparagine 358 carries N-linked (GalNAc...) asparagine glycosylation. Helical transmembrane passes span leucine 367–tyrosine 397 and leucine 398–isoleucine 422. Residues threonine 384 to glutamate 387 are selectivity filter. The Cytoplasmic portion of the chain corresponds to serine 423 to proline 706. A C-linker region spans residues alanine 427–aspartate 504. The interval alanine 507 to lysine 627 is cyclic nucleotide-binding domain. 3',5'-cyclic GMP contacts are provided by glycine 567, glutamate 568, serine 570, arginine 583, threonine 584, and aspartate 628. The stretch at isoleucine 645–valine 688 forms a coiled coil. A disordered region spans residues glutamate 685 to proline 706.

This sequence belongs to the cyclic nucleotide-gated cation channel (TC 1.A.1.5) family. CNGA3 subfamily. Forms heterotetrameric channels composed of CNGA3 and CNGB3 subunits with 3:1 stoichiometry. Testis, kidney, retinal cone (at protein level) and heart.

It localises to the cell membrane. The enzyme catalyses Ca(2+)(in) = Ca(2+)(out). It catalyses the reaction Na(+)(in) = Na(+)(out). The catalysed reaction is K(+)(in) = K(+)(out). It carries out the reaction NH4(+)(in) = NH4(+)(out). The enzyme catalyses Rb(+)(in) = Rb(+)(out). It catalyses the reaction Li(+)(in) = Li(+)(out). The catalysed reaction is Cs(+)(in) = Cs(+)(out). With respect to regulation, ca(2+) influx is inhibited by extracellular Mg(2+) ions. In terms of biological role, pore-forming subunit of the cone cyclic nucleotide-gated channel. Mediates cone photoresponses at bright light converting transient changes in intracellular cGMP levels into electrical signals. In the dark, cGMP levels are high and keep the channel open enabling a steady inward current carried by Na(+) and Ca(2+) ions that leads to membrane depolarization and neurotransmitter release from synaptic terminals. Upon photon absorption cGMP levels decline leading to channel closure and membrane hyperpolarization that ultimately slows neurotransmitter release and signals the presence of light, the end point of the phototransduction cascade. Pore-forming subunit of the gustatory cyclic nucleotide-gated channel. In the taste buds, may sense oral extracellular pH and conduct ion currents that modulate the excitability of taste cells. Conducts cGMP- and cAMP-gated ion currents, with permeability for monovalent and divalent cations. This is Cyclic nucleotide-gated channel alpha-3 from Bos taurus (Bovine).